Reading from the N-terminus, the 307-residue chain is Glycine--tRNA ligase alpha subunit (307 aa).

It belongs to the class-II aminoacyl-tRNA synthetase family. As to quaternary structure, tetramer of two alpha and two beta subunits.

It localises to the cytoplasm. The catalysed reaction is tRNA(Gly) + glycine + ATP = glycyl-tRNA(Gly) + AMP + diphosphate. This is Glycine--tRNA ligase alpha subunit from Aeromonas hydrophila subsp. hydrophila (strain ATCC 7966 / DSM 30187 / BCRC 13018 / CCUG 14551 / JCM 1027 / KCTC 2358 / NCIMB 9240 / NCTC 8049).